The following is a 660-amino-acid chain: Pentatricopeptide repeat-containing protein At1g03560, mitochondrial (660 aa).

Residues 1–12 (MRRFYRKPFSVP) constitute a mitochondrion transit peptide. PPR repeat units follow at residues 151–185 (NLECYVSLVDVLALAKDVDRIRFVSSEIKKFEFPM), 186–220 (TVSAANALIKSFGKLGMVEELLWVWRKMKENGIEP), 221–255 (TLYTYNFLMNGLVSAMFVDSAERVFEVMESGRIKP), 256–290 (DIVTYNTMIKGYCKAGQTQKAMEKLRDMETRGHEA), 291–325 (DKITYMTMIQACYADSDFGSCVALYQEMDEKGIQV), 326–360 (PPHAFSLVIGGLCKEGKLNEGYTVFENMIRKGSKP), 361–395 (NVAIYTVLIDGYAKSGSVEDAIRLLHRMIDEGFKP), 396–430 (DVVTYSVVVNGLCKNGRVEEALDYFHTCRFDGLAI), 431–465 (NSMFYSSLIDGLGKAGRVDEAERLFEEMSEKGCTR), 466–496 (DSYCYNALIDAFTKHRKVDEAIALFKRMEEE), 502–536 (TVYTYTILLSGMFKEHRNEEALKLWDMMIDKGITP), 537–571 (TAACFRALSTGLCLSGKVARACKILDELAPMGVIL), 574–605 (ACEDMINTLCKAGRIKEACKLADGITERGREV), and 606–640 (PGRIRTVMINALRKVGKADLAMKLMHSKIGIGYER).

The protein belongs to the PPR family. P subfamily.

Its subcellular location is the mitochondrion. The polypeptide is Pentatricopeptide repeat-containing protein At1g03560, mitochondrial (Arabidopsis thaliana (Mouse-ear cress)).